A 432-amino-acid polypeptide reads, in one-letter code: Methylenetetrahydrofolate--tRNA-(uracil-5-)-methyltransferase TrmFO (432 aa).

7-12 (GAGLAG) contributes to the FAD binding site.

Belongs to the MnmG family. TrmFO subfamily. It depends on FAD as a cofactor.

It is found in the cytoplasm. The catalysed reaction is uridine(54) in tRNA + (6R)-5,10-methylene-5,6,7,8-tetrahydrofolate + NADH + H(+) = 5-methyluridine(54) in tRNA + (6S)-5,6,7,8-tetrahydrofolate + NAD(+). It carries out the reaction uridine(54) in tRNA + (6R)-5,10-methylene-5,6,7,8-tetrahydrofolate + NADPH + H(+) = 5-methyluridine(54) in tRNA + (6S)-5,6,7,8-tetrahydrofolate + NADP(+). Its function is as follows. Catalyzes the folate-dependent formation of 5-methyl-uridine at position 54 (M-5-U54) in all tRNAs. The polypeptide is Methylenetetrahydrofolate--tRNA-(uracil-5-)-methyltransferase TrmFO (Anoxybacillus flavithermus (strain DSM 21510 / WK1)).